The primary structure comprises 567 residues: Zinc finger protein 512 (567 aa).

The disordered stretch occupies residues methionine 1–arginine 32. Positions serine 12–threonine 23 are enriched in polar residues. Residues lysine 18 and lysine 84 each participate in a glycyl lysine isopeptide (Lys-Gly) (interchain with G-Cter in SUMO2) cross-link. The segment at alanine 86–proline 148 is disordered. A compositionally biased stretch (basic residues) spans lysine 119–proline 130. Residues phenylalanine 197–histidine 220 form a C2H2-type 1 zinc finger. Lysine 227 participates in a covalent cross-link: Glycyl lysine isopeptide (Lys-Gly) (interchain with G-Cter in SUMO2). The C2H2-type 2 zinc-finger motif lies at leucine 287–histidine 310. A Glycyl lysine isopeptide (Lys-Gly) (interchain with G-Cter in SUMO2) cross-link involves residue lysine 333. Residues isoleucine 406–cysteine 430 form a C2H2-type 3; atypical zinc finger. The segment at tyrosine 440–histidine 463 adopts a C2H2-type 4 zinc-finger fold. The tract at residues glutamine 486 to lysine 567 is disordered. Basic residues predominate over residues arginine 495 to glutamine 508. Basic and acidic residues predominate over residues valine 523–glutamate 532. Residues lysine 556–lysine 567 are compositionally biased toward basic residues.

Belongs to the krueppel C2H2-type zinc-finger protein family.

It localises to the nucleus. Its function is as follows. May be involved in transcriptional regulation. The sequence is that of Zinc finger protein 512 (ZNF512) from Pongo abelii (Sumatran orangutan).